A 431-amino-acid polypeptide reads, in one-letter code: RbAp48-related WD40 repeat-containing protein prw1 (431 aa).

WD repeat units lie at residues 127–159 (SHPE…LVFD), 182–213 (KHTQ…SCWD), 232–263 (SHEK…HVHD), 279–310 (AHSG…ALWD), 323–354 (GHED…LVWD), and 380–411 (GHTS…QIWT).

It belongs to the WD repeat HIR1 family. As to quaternary structure, heterotetramer of alp13, clr6, prw1 and pst2.

The protein localises to the nucleus. In terms of biological role, has a role in chromatin assembly and chromosome segregation. Involved in the deacetylation of histones. This Schizosaccharomyces pombe (strain 972 / ATCC 24843) (Fission yeast) protein is RbAp48-related WD40 repeat-containing protein prw1 (prw1).